Reading from the N-terminus, the 237-residue chain is Demethylmenaquinone methyltransferase (237 aa).

S-adenosyl-L-methionine-binding positions include Thr-58, Asp-79, and 106-107 (NA).

This sequence belongs to the class I-like SAM-binding methyltransferase superfamily. MenG/UbiE family.

It catalyses the reaction a 2-demethylmenaquinol + S-adenosyl-L-methionine = a menaquinol + S-adenosyl-L-homocysteine + H(+). The protein operates within quinol/quinone metabolism; menaquinone biosynthesis; menaquinol from 1,4-dihydroxy-2-naphthoate: step 2/2. Methyltransferase required for the conversion of demethylmenaquinol (DMKH2) to menaquinol (MKH2). The chain is Demethylmenaquinone methyltransferase from Listeria innocua serovar 6a (strain ATCC BAA-680 / CLIP 11262).